We begin with the raw amino-acid sequence, 167 residues long: MNQSYFNLLGNITWLWMNSPLHKEWSCELLARNVIPAIENEQYMLLIDDGIPVAYCSWADLNLENEVKYIKDISSLTLEEWQSGDRRWIIDWVAPFGHSQLLYKKMCQKYPDMIVRSIRFQPNQKSVGKISYFKGGKLDKKTAKKRFDTYQEELATALKNEFNFIKK.

Residues histidine 22 and aspartate 91 contribute to the active site.

The protein belongs to the RTX toxin acyltransferase family.

It is found in the cytoplasm. It catalyses the reaction a fatty acyl-[ACP] + L-lysyl-[protein] = N(6)-(fatty acyl)-L-lysyl-[protein] + holo-[ACP] + H(+). Involved in fatty acylation of the protoxin (LktA) at two internal lysine residues, thereby converting it to the active toxin. The protein is Leukotoxin-activating lysine-acyltransferase LktC serotype A11 (lktC) of Mannheimia haemolytica (Pasteurella haemolytica).